The primary structure comprises 311 residues: Pyrimidine-specific ribonucleoside hydrolase RihA (311 aa).

H240 is an active-site residue.

This sequence belongs to the IUNH family. RihA subfamily.

Hydrolyzes cytidine or uridine to ribose and cytosine or uracil, respectively. The polypeptide is Pyrimidine-specific ribonucleoside hydrolase RihA (Salmonella agona (strain SL483)).